We begin with the raw amino-acid sequence, 213 residues long: Orotate phosphoribosyltransferase (213 aa).

K26 lines the 5-phospho-alpha-D-ribose 1-diphosphate pocket. Position 34–35 (34–35 (FF)) interacts with orotate. 5-phospho-alpha-D-ribose 1-diphosphate-binding positions include 72–73 (YK), R99, K100, K103, H105, and 124–132 (DDVITAGTA). Orotate-binding residues include T128 and R156.

Belongs to the purine/pyrimidine phosphoribosyltransferase family. PyrE subfamily. In terms of assembly, homodimer. It depends on Mg(2+) as a cofactor.

It catalyses the reaction orotidine 5'-phosphate + diphosphate = orotate + 5-phospho-alpha-D-ribose 1-diphosphate. The protein operates within pyrimidine metabolism; UMP biosynthesis via de novo pathway; UMP from orotate: step 1/2. In terms of biological role, catalyzes the transfer of a ribosyl phosphate group from 5-phosphoribose 1-diphosphate to orotate, leading to the formation of orotidine monophosphate (OMP). The chain is Orotate phosphoribosyltransferase from Escherichia coli O127:H6 (strain E2348/69 / EPEC).